Here is a 488-residue protein sequence, read N- to C-terminus: Phenylalanine--tRNA ligase alpha subunit (488 aa).

L-phenylalanine is bound by residues Thr315, 354–356, Phe394, and Phe419; that span reads QLD.

This sequence belongs to the class-II aminoacyl-tRNA synthetase family. Phe-tRNA synthetase alpha subunit type 2 subfamily. In terms of assembly, tetramer of two alpha and two beta subunits. Mg(2+) is required as a cofactor.

Its subcellular location is the cytoplasm. The catalysed reaction is tRNA(Phe) + L-phenylalanine + ATP = L-phenylalanyl-tRNA(Phe) + AMP + diphosphate + H(+). The sequence is that of Phenylalanine--tRNA ligase alpha subunit from Pyrobaculum arsenaticum (strain DSM 13514 / JCM 11321 / PZ6).